A 209-amino-acid chain; its full sequence is Uracil phosphoribosyltransferase (209 aa).

Residues arginine 79, arginine 104, and 131 to 139 (DPMLATGGS) contribute to the 5-phospho-alpha-D-ribose 1-diphosphate site. Uracil-binding positions include valine 194 and 199 to 201 (GDA). 5-phospho-alpha-D-ribose 1-diphosphate is bound at residue aspartate 200.

This sequence belongs to the UPRTase family. Mg(2+) serves as cofactor.

It carries out the reaction UMP + diphosphate = 5-phospho-alpha-D-ribose 1-diphosphate + uracil. It participates in pyrimidine metabolism; UMP biosynthesis via salvage pathway; UMP from uracil: step 1/1. With respect to regulation, allosterically activated by GTP. Functionally, catalyzes the conversion of uracil and 5-phospho-alpha-D-ribose 1-diphosphate (PRPP) to UMP and diphosphate. This chain is Uracil phosphoribosyltransferase, found in Bacillus cytotoxicus (strain DSM 22905 / CIP 110041 / 391-98 / NVH 391-98).